The primary structure comprises 1659 residues: Vitellogenin (1659 aa).

The first 15 residues, 1–15, serve as a signal peptide directing secretion; it reads MRAVVLALTLALVAS. One can recognise a Vitellogenin domain in the interval 24-662; the sequence is FAASKTYVYK…DAATLFPRTV (639 aa). Asn-1089 carries N-linked (GlcNAc...) asparagine glycosylation. Composition is skewed to low complexity over residues 1090–1111 and 1119–1129; these read GTRA…SSSR and SSSSSSSSSSR. The tract at residues 1090-1163 is disordered; sequence GTRASSSSSS…SQSTSNVISR (74 aa). The 177-residue stretch at 1389 to 1565 folds into the VWFD domain; the sequence is VKCSMVRDTL…SWVLPSDSCR (177 aa). 2 disulfides stabilise this stretch: Cys-1391/Cys-1528 and Cys-1414/Cys-1564. A glycan (N-linked (GlcNAc...) asparagine) is linked at Asn-1627.

Post-translationally, phosvitin, an egg yolk storage protein, is one of the most highly phosphorylated (10%) proteins in nature. Produced by the liver, secreted into the blood and then sequestered by receptor mediated endocytosis into growing oocytes, where it is generally cleaved, giving rise to the respective yolk components lipovitellin-I, phosvitin, lipovitellin-II.

Functionally, precursor of the major egg-yolk proteins that are sources of nutrients during early development of oviparous organisms. The protein is Vitellogenin (vtg1) of Oncorhynchus mykiss (Rainbow trout).